A 216-amino-acid chain; its full sequence is Peptide methionine sulfoxide reductase MsrA (216 aa).

Cysteine 54 is an active-site residue.

The protein belongs to the MsrA Met sulfoxide reductase family.

It catalyses the reaction L-methionyl-[protein] + [thioredoxin]-disulfide + H2O = L-methionyl-(S)-S-oxide-[protein] + [thioredoxin]-dithiol. The enzyme catalyses [thioredoxin]-disulfide + L-methionine + H2O = L-methionine (S)-S-oxide + [thioredoxin]-dithiol. Functionally, has an important function as a repair enzyme for proteins that have been inactivated by oxidation. Catalyzes the reversible oxidation-reduction of methionine sulfoxide in proteins to methionine. This chain is Peptide methionine sulfoxide reductase MsrA, found in Xanthomonas euvesicatoria pv. vesicatoria (strain 85-10) (Xanthomonas campestris pv. vesicatoria).